We begin with the raw amino-acid sequence, 552 residues long: Urocanate hydratase (552 aa).

NAD(+) is bound by residues 49–50 (GG), Gln-127, 173–175 (GMG), Asp-193, 239–240 (NA), 260–264 (QTSAH), 270–271 (YI), and Tyr-319. Cys-407 is an active-site residue. Gly-489 serves as a coordination point for NAD(+).

This sequence belongs to the urocanase family. It depends on NAD(+) as a cofactor.

The protein resides in the cytoplasm. It catalyses the reaction 4-imidazolone-5-propanoate = trans-urocanate + H2O. It participates in amino-acid degradation; L-histidine degradation into L-glutamate; N-formimidoyl-L-glutamate from L-histidine: step 2/3. Catalyzes the conversion of urocanate to 4-imidazolone-5-propionate. This Bacillus cereus (strain B4264) protein is Urocanate hydratase.